Reading from the N-terminus, the 216-residue chain is Regulatory protein RecX (216 aa).

It belongs to the RecX family.

The protein localises to the cytoplasm. Functionally, modulates RecA activity. The protein is Regulatory protein RecX of Clostridium tetani (strain Massachusetts / E88).